We begin with the raw amino-acid sequence, 340 residues long: Nuclear hormone receptor family member nhr-268 (340 aa).

Residues 1 to 75 constitute a DNA-binding region (nuclear receptor); the sequence is MNCLVCSARA…IGMKAASKND (75 aa). 2 NR C4-type zinc fingers span residues 3–23 and 39–58; these read CLVCSARAFNRNYGVMSCFAC and CKYFKNCTIHYKTHPKCRAC. The NR LBD domain occupies 98–337; that stretch reads KNDKNYSNFI…KRLMQDIFSH (240 aa).

Belongs to the nuclear hormone receptor family.

It localises to the nucleus. Functionally, orphan nuclear receptor. This is Nuclear hormone receptor family member nhr-268 (nhr-268) from Caenorhabditis elegans.